Here is a 553-residue protein sequence, read N- to C-terminus: Arginine--tRNA ligase (553 aa).

Residues 130-140 (ANPTGDLHIGH) carry the 'HIGH' region motif.

This sequence belongs to the class-I aminoacyl-tRNA synthetase family. Monomer.

The protein resides in the cytoplasm. The enzyme catalyses tRNA(Arg) + L-arginine + ATP = L-arginyl-tRNA(Arg) + AMP + diphosphate. The protein is Arginine--tRNA ligase of Staphylococcus epidermidis (strain ATCC 35984 / DSM 28319 / BCRC 17069 / CCUG 31568 / BM 3577 / RP62A).